A 42-amino-acid chain; its full sequence is Conotoxin Au11.6 (42 aa).

4 cysteine pairs are disulfide-bonded: cysteine 6-cysteine 20, cysteine 13-cysteine 25, cysteine 19-cysteine 30, and cysteine 24-cysteine 37.

It belongs to the conotoxin I1 superfamily. As to expression, expressed by the venom duct.

The protein resides in the secreted. This Conus aulicus (Princely cone) protein is Conotoxin Au11.6.